The chain runs to 406 residues: Beta-galactoside alpha-2,6-sialyltransferase 1 (406 aa).

At 1-9 the chain is on the cytoplasmic side; that stretch reads MIHTNLKKK. Residues 10–26 traverse the membrane as a helical; Signal-anchor for type II membrane protein segment; sequence FSCCVLVFLLFAVICVW. Residues 27 to 406 are Lumenal-facing; sequence KEKKKGSYYD…TLPGFRTIHC (380 aa). Intrachain disulfides connect Cys142-Cys406, Cys184-Cys335, and Cys353-Cys364. 2 N-linked (GlcNAc...) asparagine glycosylation sites follow: Asn149 and Asn161. Substrate-binding positions include Ser189, Asn212, Asn233, 322 to 324, Cys353, Tyr354, Thr365, Tyr369, His370, and Lys376; that span reads SSG. Tyr369 carries the post-translational modification Phosphotyrosine.

It belongs to the glycosyltransferase 29 family. In terms of assembly, monomer and homodimer. In terms of processing, N-glycosylated.

The protein localises to the golgi apparatus. It localises to the golgi stack membrane. It is found in the secreted. The enzyme catalyses a beta-D-galactoside + CMP-N-acetyl-beta-neuraminate = an N-acetyl-alpha-neuraminyl-(2-&gt;6)-beta-D-galactosyl derivative + CMP + H(+). The protein operates within protein modification; protein glycosylation. Inhibited by CTP. In terms of biological role, transfers sialic acid from CMP-sialic acid to galactose-containing acceptor substrates. In B lymphocytes, generates neuraminidase-sensitive lymphocyte cell-surface differentiation antigens, such as CDw75, HB-6 and CD76. This is Beta-galactoside alpha-2,6-sialyltransferase 1 (ST6GAL1) from Homo sapiens (Human).